The following is a 410-amino-acid chain: Putative ankyrin repeat protein FPV240 (410 aa).

ANK repeat units follow at residues 33-62 (NGYS…YPDY), 66-95 (DIES…FIND), 100-129 (KGNT…DTDV), 133-162 (DRFT…CTNI), 166-195 (YGCT…NIDY), and 200-229 (PCVT…DSNI).

This Vertebrata (FPV) protein is Putative ankyrin repeat protein FPV240.